The following is a 166-amino-acid chain: Lipoprotein signal peptidase (166 aa).

A run of 4 helical transmembrane segments spans residues Ala-9–Leu-29, Ala-45–Leu-65, Trp-71–Leu-91, and Leu-99–Leu-119. Residues Asp-126 and Asp-144 contribute to the active site. The helical transmembrane segment at Trp-135–Ile-155 threads the bilayer.

Belongs to the peptidase A8 family.

It localises to the cell inner membrane. The catalysed reaction is Release of signal peptides from bacterial membrane prolipoproteins. Hydrolyzes -Xaa-Yaa-Zaa-|-(S,diacylglyceryl)Cys-, in which Xaa is hydrophobic (preferably Leu), and Yaa (Ala or Ser) and Zaa (Gly or Ala) have small, neutral side chains.. It participates in protein modification; lipoprotein biosynthesis (signal peptide cleavage). Functionally, this protein specifically catalyzes the removal of signal peptides from prolipoproteins. The sequence is that of Lipoprotein signal peptidase from Burkholderia vietnamiensis (strain G4 / LMG 22486) (Burkholderia cepacia (strain R1808)).